A 352-amino-acid polypeptide reads, in one-letter code: Ion-translocating oxidoreductase complex subunit D (352 aa).

Helical transmembrane passes span 20–40 (IMLL…CFFG), 42–62 (GTLV…ALVL), 89–109 (IPPL…VIIA), and 123–143 (PAMI…TSWL). Threonine 187 is modified (FMN phosphoryl threonine). Transmembrane regions (helical) follow at residues 215–235 (LAGA…VWLL), 242–262 (WHIP…GWLF), 267–287 (LAAP…FFIL), 301–321 (LIFG…GGYP), and 322–342 (DGVA…DYYT).

The protein belongs to the NqrB/RnfD family. In terms of assembly, the complex is composed of six subunits: RsxA, RsxB, RsxC, RsxD, RsxE and RsxG. The cofactor is FMN.

The protein resides in the cell inner membrane. Its function is as follows. Part of a membrane-bound complex that couples electron transfer with translocation of ions across the membrane. Required to maintain the reduced state of SoxR. The protein is Ion-translocating oxidoreductase complex subunit D of Escherichia coli O7:K1 (strain IAI39 / ExPEC).